Consider the following 533-residue polypeptide: UDP-glucuronosyltransferase 1A1 (533 aa).

The first 25 residues, 1-25 (MAVESQGGRPLVLGLLLCVLGPVVS), serve as a signal peptide directing secretion. Residues Asn102, Asn295, and Asn347 are each glycosylated (N-linked (GlcNAc...) asparagine). Residues 491 to 507 (VIGFLLAVVLTVAFITF) form a helical membrane-spanning segment.

Belongs to the UDP-glycosyltransferase family. As to quaternary structure, homodimer. Homooligomer. Interacts with UGT1A3, UGT1A4, UGT1A6, UGT1A7, UGT1A8, UGT1A9 and UGT1A10 to form heterodimers. Isoform 1 interacts with isoform 2/i2 suggesting that oligomerization is involved in negative regulation of transferase activity by isoform 2. Isoform 1 also interacts with respective i2 isoforms of UGT1A3, UGT1A4, UGT1A6, UGT1A7, UGT1A8, UGT1A9 and UGT1A10. In terms of tissue distribution, expressed in liver, colon and small intestine. Not expressed in kidney, esophagus and skin. Expressed in liver, colon, small intestine and kidney. Not expressed in esophagus and skin.

It is found in the endoplasmic reticulum membrane. The protein localises to the cytoplasm. The protein resides in the perinuclear region. It catalyses the reaction glucuronate acceptor + UDP-alpha-D-glucuronate = acceptor beta-D-glucuronoside + UDP + H(+). It carries out the reaction 17beta-estradiol + UDP-alpha-D-glucuronate = 17beta-estradiol 3-O-(beta-D-glucuronate) + UDP + H(+). The enzyme catalyses 2-hydroxyestrone + UDP-alpha-D-glucuronate = 2-hydroxyestrone 3-O-(beta-D-glucuronate) + UDP + H(+). The catalysed reaction is 2-hydroxy-17beta-estradiol + UDP-alpha-D-glucuronate = 2-hydroxy-17beta-estradiol 3-O-(beta-D-glucuronate) + UDP + H(+). It catalyses the reaction 2-methoxy-17beta-estradiol + UDP-alpha-D-glucuronate = 2-methoxy-17beta-estradiol 3-O-(beta-D-glucuronate) + UDP + H(+). It carries out the reaction 17alpha-estradiol + UDP-alpha-D-glucuronate = 17alpha-estradiol 3-O-(beta-D-glucuronate) + UDP + H(+). The enzyme catalyses 16beta,17beta-estriol + UDP-alpha-D-glucuronate = 16beta,17beta-estriol 16-O-(beta-D-glucuronate) + UDP + H(+). The catalysed reaction is losartan + UDP-alpha-D-glucuronate = losartan-2-N-beta-D-glucuronide + UDP. It catalyses the reaction prunetin + UDP-alpha-D-glucuronate = prunetin-4'-O-beta-D-glucuronide + UDP. It carries out the reaction SN-38 + UDP-alpha-D-glucuronate = SN-38 O-beta-D-glucuronide + UDP + H(+). The enzyme catalyses (4Z,15Z)-bilirubin IXalpha + UDP-alpha-D-glucuronate = (4Z,15Z)-bilirubin IXalpha C12-beta-D-glucuronoside + UDP. The catalysed reaction is (4Z,15Z)-bilirubin IXalpha + UDP-alpha-D-glucuronate = (4Z,15Z)-bilirubin IXalpha C8-beta-D-glucuronoside + UDP. It catalyses the reaction (4Z,15Z)-bilirubin IXalpha C8-beta-D-glucuronoside + UDP-alpha-D-glucuronate = (4Z,15Z)-bilirubin IXalpha C8,C12-beta-D-bisglucuronoside + UDP. It carries out the reaction (4Z,15Z)-bilirubin IXalpha C12-beta-D-glucuronoside + UDP-alpha-D-glucuronate = (4Z,15Z)-bilirubin IXalpha C8,C12-beta-D-bisglucuronoside + UDP. The enzyme catalyses 8-iso-prostaglandin F2alpha + UDP-alpha-D-glucuronate = 8-iso-prostaglandin F2alpha-glucuronide + UDP + H(+). The catalysed reaction is (5Z,8Z,11Z,14Z)-eicosatetraenoate + UDP-alpha-D-glucuronate = O-[(5Z),(8Z),(11Z),(14Z)-eicosatetraenoyl]-beta-D-glucuronate + UDP. It catalyses the reaction 15-hydroxy-(5Z,8Z,11Z,13E)-eicosatetraenoate + UDP-alpha-D-glucuronate = 15-O-(beta-D-glucuronosyl)-(5Z,8Z,11Z,14Z)-eicosatetraenoate + UDP + H(+). It carries out the reaction 20-hydroxy-(5Z,8Z,11Z,14Z)-eicosatetraenoate + UDP-alpha-D-glucuronate = 20-O-(beta-D-glucuronosyl)-(5Z,8Z,11Z,14Z)-eicosatetraenoate + UDP + H(+). The enzyme catalyses prostaglandin B1 + UDP-alpha-D-glucuronate = 15-O-(beta-D-glucuronosyl)-prostaglandin B1 + UDP + H(+). The catalysed reaction is (E)-ferulate + UDP-alpha-D-glucuronate = (E)-4-O-(beta-D-glucuronosyl)-ferulate + UDP + H(+). It catalyses the reaction (E)-ferulate + UDP-alpha-D-glucuronate = (E)-ferulic acid beta-D-glucuronate ester + UDP. UDP-glucuronosyltransferase (UGT) that catalyzes phase II biotransformation reactions in which lipophilic substrates are conjugated with glucuronic acid to increase the metabolite's water solubility, thereby facilitating excretion into either the urine or bile. Essential for the elimination and detoxification of drugs, xenobiotics and endogenous compounds. Catalyzes the glucuronidation of endogenous estrogen hormones such as estradiol, estrone and estriol. Involved in the glucuronidation of bilirubin, a degradation product occurring in the normal catabolic pathway that breaks down heme in vertebrates. Involved in the glucuronidation of arachidonic acid (AA) and AA-derived eicosanoids including 15-HETE, 20-HETE, PGB1 and F2-isoprostane (8-iso-PGF2alpha). Involved in the glucuronidation of the phytochemical ferulic acid at the phenolic or the carboxylic acid group. Also catalyzes the glucuronidation the isoflavones genistein, daidzein, glycitein, formononetin, biochanin A and prunetin, which are phytoestrogens with anticancer and cardiovascular properties. Involved in the glucuronidation of the AGTR1 angiotensin receptor antagonist losartan, a drug which can inhibit the effect of angiotensin II. Involved in the biotransformation of 7-ethyl-10-hydroxycamptothecin (SN-38), the pharmacologically active metabolite of the anticancer drug irinotecan. In terms of biological role, lacks UGT glucuronidation activity but acts as a negative regulator of isoform 1. The protein is UDP-glucuronosyltransferase 1A1 of Homo sapiens (Human).